Consider the following 430-residue polypeptide: MAAQFYERNTSGMNADRFMTRLTDESTVNTMQRHYWTARQFIRTKLGKKEDEHLEASDNELDTCLNLYRSVHGTSFQLLNNVDNYANFLLDETLVQNVLGKYLKEKGKIDKTEAVGRILIAVGRSLLFSSHRLNAARIGVSTFYNKLSVFVERAIGDCSQTIEAVQMCRTEYRGSLLWMKKTSEELDPEVDGSMEKFREAQTTVKSNKERLDRLKTDTLQKVDLLSASRSNLLSYVLTHYQNELYEYYSKTSRAFETLAENINCYNNYDFEILSHLATGTKPERERKSEKEESAKTSQPRGNEEELKNLLFGRESPQFGEEEVQDESRSQCDSPLIEDVDDERRKTGDLLDLESAASIAFPIGPLATLFDTSSFVPPILPPPKPNAVSDDILSLFDGNKANSSGKEASATTMDWQSLIDGFDRENEDNLL.

An AH domain is found at 56–260; that stretch reads ASDNELDTCL…TSRAFETLAE (205 aa). Positions 279 to 342 are disordered; sequence GTKPERERKS…SPLIEDVDDE (64 aa). Over residues 281–294 the composition is skewed to basic and acidic residues; that stretch reads KPERERKSEKEESA.

Interacts with the GTPase activator protein tbc-8; the interaction is direct and may be required for the activation of rab-2 and dense vesicle maturation in cholinergic motoneurons. Interacts with rund-1. As to expression, expressed in all neurons. Highly expressed in m2 pharyngeal neurons and some pharyngeal interneurons. Also expressed in the excretory canal and the gland cells located just below the nerve ring in the head.

Its subcellular location is the cytoplasm. The protein localises to the cytoplasmic vesicle membrane. Its function is as follows. May be involved in neurotransmitter secretion. In association with the GTPase activator protein tbc-8 activates rab-2 during dense core vesicle maturation in cholinergic motoneurons. The sequence is that of Resistance to inhibitors of cholinesterase protein 19 from Caenorhabditis elegans.